A 262-amino-acid chain; its full sequence is Serine O-acetyltransferase (262 aa).

Catalysis depends on Cys107, which acts as the Acyl-thioester intermediate. A substrate-binding site is contributed by Lys128. His200 (proton acceptor) is an active-site residue. Glu202 is an active-site residue. Residue Arg214 coordinates substrate.

It belongs to the MetA family.

It is found in the cytoplasm. It carries out the reaction L-serine + acetyl-CoA = O-acetyl-L-serine + CoA. It catalyses the reaction L-homoserine + acetyl-CoA = O-acetyl-L-homoserine + CoA. The protein operates within amino-acid biosynthesis; L-cysteine biosynthesis; L-cysteine from L-serine: step 1/2. Transfers an acetyl group from acetyl-CoA to L-serine, forming acetyl-L-serine. In vitro, also has homoserine acetyl transferase activity. The protein is Serine O-acetyltransferase of Lactobacillus acidophilus.